Here is a 284-residue protein sequence, read N- to C-terminus: MQIINDPAEMQKIAEKLRLQHQYIGVVMTMGALHEGHLSLVKLAKAHAGTVIMTIFVNPTQFGPNEDFYRYPRPFEQDAALARSAGVDYLFAPSTEAMYPDGYSTSIDPGPIATRFEGASRPGHFGGMVTVVVKLLGITRPHLAVFGEKDAQQLAIIRRVVTDLNIGTTILGAPIVRESDGLATSSRNIYLSSNERQQATVLYRAIRYAKMEIDKDRTDLEAIAGEAEALVRSEPDAEPDYLCFVDDATFEPVTQAVTGKAYRLIMAVRIGSTRLIDNWRFDYQ.

30 to 37 (MGALHEGH) lines the ATP pocket. The Proton donor role is filled by histidine 37. Glutamine 61 provides a ligand contact to (R)-pantoate. Position 61 (glutamine 61) interacts with beta-alanine. 147-150 (GEKD) provides a ligand contact to ATP. Position 153 (glutamine 153) interacts with (R)-pantoate. Residues valine 176 and 184 to 187 (TSSR) each bind ATP.

Belongs to the pantothenate synthetase family. Homodimer.

The protein localises to the cytoplasm. It catalyses the reaction (R)-pantoate + beta-alanine + ATP = (R)-pantothenate + AMP + diphosphate + H(+). It participates in cofactor biosynthesis; (R)-pantothenate biosynthesis; (R)-pantothenate from (R)-pantoate and beta-alanine: step 1/1. Functionally, catalyzes the condensation of pantoate with beta-alanine in an ATP-dependent reaction via a pantoyl-adenylate intermediate. This Chlorobaculum tepidum (strain ATCC 49652 / DSM 12025 / NBRC 103806 / TLS) (Chlorobium tepidum) protein is Pantothenate synthetase.